Consider the following 522-residue polypeptide: MTPNIHHDKILILDFGAQYTQLIARRIREIGVYCEVWPWDHSPEEILSFGAKGIILSGGPESTTSPGAPAAPQHVFDSDLPILGICYGMQTMAVHLGGATEAADKREFGHASVQVIYPDTLFSGLSDHPSEFRLDVWMSHGDHVSRVPPGFTITAATDRIPIAAMSREDKRWYGVQFHPEVTHTLQGQALLRRFVVDICGCQMLWTAANIIEDQIAHVRERVGCDEVILGLSGGVDSSVVAALLQKAIGSQLTCVFVDTGLLRWGEGDQVMAMFAEHMGVNVVRINAASRYFDALQGVYDPEAKRKIIGNLFIQIFEEEASKRKQAKWLAQGTIYPDVIESAGSKTGKAHVIKSHHNVGGLPEQMTLGMVEPLRELFKDEVRRLGVALGLPHAMVYRHPFPGPGLGVRILGEVKPEYAELLAKADAIFIDELHQADLYDKVSQAFAVFLPVKSVGVVGDARAYEWVIALRAVETVDFMTAQWAPLPYDFLSTVSNRIINELRGVSRVVYDISGKPPATIEWE.

One can recognise a Glutamine amidotransferase type-1 domain in the interval 9 to 204 (KILILDFGAQ…VVDICGCQML (196 aa)). Cysteine 86 serves as the catalytic Nucleophile. Residues histidine 178 and glutamate 180 contribute to the active site. Residues 205-397 (WTAANIIEDQ…LGLPHAMVYR (193 aa)) enclose the GMPS ATP-PPase domain. 232 to 238 (SGGVDSS) serves as a coordination point for ATP.

Homodimer.

The enzyme catalyses XMP + L-glutamine + ATP + H2O = GMP + L-glutamate + AMP + diphosphate + 2 H(+). The protein operates within purine metabolism; GMP biosynthesis; GMP from XMP (L-Gln route): step 1/1. Catalyzes the synthesis of GMP from XMP. In Xylella fastidiosa (strain 9a5c), this protein is GMP synthase [glutamine-hydrolyzing] (guaA).